Consider the following 757-residue polypeptide: Endonuclease MutS2 (757 aa).

321 to 328 (GPNMGGKT) provides a ligand contact to ATP. The Smr domain occupies 681-756 (IDIRGMTVEE…GTGVTVVEVK (76 aa)).

It belongs to the DNA mismatch repair MutS family. MutS2 subfamily. In terms of assembly, homodimer. Binds to stalled ribosomes, contacting rRNA.

Endonuclease that is involved in the suppression of homologous recombination and thus may have a key role in the control of bacterial genetic diversity. Functionally, acts as a ribosome collision sensor, splitting the ribosome into its 2 subunits. Detects stalled/collided 70S ribosomes which it binds and splits by an ATP-hydrolysis driven conformational change. Acts upstream of the ribosome quality control system (RQC), a ribosome-associated complex that mediates the extraction of incompletely synthesized nascent chains from stalled ribosomes and their subsequent degradation. Probably generates substrates for RQC. The sequence is that of Endonuclease MutS2 from Thermotoga sp. (strain RQ2).